The chain runs to 84 residues: uncharacterized protein (84 aa).

The protein belongs to the chlamydial CPn_0710/CT_666/TC_0037 family.

This is an uncharacterized protein from Chlamydia pneumoniae (Chlamydophila pneumoniae).